The following is a 488-amino-acid chain: Arginine biosynthesis bifunctional protein ArgJ, mitochondrial (488 aa).

Substrate contacts are provided by threonine 227, lysine 250, threonine 261, glutamate 340, asparagine 483, and serine 488. Catalysis depends on threonine 261, which acts as the Nucleophile.

Belongs to the ArgJ family. In terms of assembly, heterodimer of an alpha and a beta chain. Post-translationally, the alpha and beta chains are autoproteolytically processed from a single precursor protein within the mitochondrion.

Its subcellular location is the mitochondrion matrix. The catalysed reaction is N(2)-acetyl-L-ornithine + L-glutamate = N-acetyl-L-glutamate + L-ornithine. It catalyses the reaction L-glutamate + acetyl-CoA = N-acetyl-L-glutamate + CoA + H(+). It participates in amino-acid biosynthesis; L-arginine biosynthesis; L-ornithine and N-acetyl-L-glutamate from L-glutamate and N(2)-acetyl-L-ornithine (cyclic): step 1/1. It functions in the pathway amino-acid biosynthesis; L-arginine biosynthesis; N(2)-acetyl-L-ornithine from L-glutamate: step 1/4. Functionally, catalyzes two activities which are involved in the cyclic version of arginine biosynthesis: the synthesis of acetylglutamate from glutamate and acetyl-CoA, and of ornithine by transacetylation between acetylornithine and glutamate. The protein is Arginine biosynthesis bifunctional protein ArgJ, mitochondrial of Thalassiosira pseudonana (Marine diatom).